A 504-amino-acid polypeptide reads, in one-letter code: Calcium/calmodulin-dependent protein kinase type II (504 aa).

The 287-residue stretch at 65 to 351 folds into the Protein kinase domain; it reads YQLIENLGDG…IHQFFQHPWI (287 aa). ATP contacts are provided by residues 71–79 and Lys-94; that span reads LGDGAFSQV. Residue Asp-188 is the Proton acceptor of the active site. Position 252 is a phosphothreonine (Thr-252).

This sequence belongs to the protein kinase superfamily. CAMK Ser/Thr protein kinase family. CaMK subfamily. In terms of assembly, interacts with sty1. Requires Mg(2+) as cofactor. Autophosphorylated.

Its subcellular location is the cytoplasm. The protein resides in the barrier septum. The protein localises to the forespore membrane. It is found in the ascus epiplasm. The enzyme catalyses L-seryl-[protein] + ATP = O-phospho-L-seryl-[protein] + ADP + H(+). It catalyses the reaction L-threonyl-[protein] + ATP = O-phospho-L-threonyl-[protein] + ADP + H(+). Has a role in the regulation of G2/M transition during the mitotic cell cycle. The sequence is that of Calcium/calmodulin-dependent protein kinase type II from Schizosaccharomyces pombe (strain 972 / ATCC 24843) (Fission yeast).